The following is a 153-amino-acid chain: Ribosome maturation factor RimP (153 aa).

This sequence belongs to the RimP family.

It localises to the cytoplasm. Required for maturation of 30S ribosomal subunits. This Coxiella burnetii (strain RSA 331 / Henzerling II) protein is Ribosome maturation factor RimP.